Consider the following 492-residue polypeptide: Glycerol kinase 1 (492 aa).

Thr10 contacts ADP. ATP is bound by residues Thr10 and Ser11. Position 10 (Thr10) interacts with sn-glycerol 3-phosphate. Residue Lys14 participates in ADP binding. Sn-glycerol 3-phosphate-binding residues include Arg80, Glu81, Tyr132, and Asp241. Residues Arg80, Glu81, Tyr132, and Asp241 each contribute to the glycerol site. The ADP site is built by Thr263, Gly306, Gly407, and Asn411. Thr263, Gly306, and Gly407 together coordinate ATP.

This sequence belongs to the FGGY kinase family.

It catalyses the reaction glycerol + ATP = sn-glycerol 3-phosphate + ADP + H(+). It functions in the pathway polyol metabolism; glycerol degradation via glycerol kinase pathway; sn-glycerol 3-phosphate from glycerol: step 1/1. With respect to regulation, inhibited by fructose 1,6-bisphosphate (FBP). Functionally, key enzyme in the regulation of glycerol uptake and metabolism. Catalyzes the phosphorylation of glycerol to yield sn-glycerol 3-phosphate. The sequence is that of Glycerol kinase 1 from Thermotoga maritima (strain ATCC 43589 / DSM 3109 / JCM 10099 / NBRC 100826 / MSB8).